The chain runs to 263 residues: Meiotic drive suppressor wtf6 (263 aa).

Positions 1-68 (MKNNYTSLKS…REKNPSRSTD (68 aa)) are disordered. The span at 19–30 (KTDHEIDLEKGP) shows a compositional bias: basic and acidic residues. 3 consecutive transmembrane segments (helical) span residues 73-93 (FLIK…PAVC), 110-130 (WTLF…LTYF), and 201-221 (SASA…AETV).

It belongs to the WTF family. In terms of assembly, homomer. Interacts with other proteins that exhibit high sequence similarity.

Its subcellular location is the spore membrane. It is found in the vacuole membrane. Its function is as follows. Acts as a suppressor component of the dual wtf meiotic drive system, and can suppress but not confer meiotic drive by compatible poisons. Wtf meiotic drive systems promote unequal transmission of alleles from the parental zygote to progeny spores by encoding a poison and an antidote from the same locus; the poison is trans-acting and forms toxic aggregates in all spores within an ascus, wherease the antidote is spore-specific and targets aggregates for degradation by the vacuole. Meiotic drive by wtf systems therefore lead to poisoning of all progeny that do not inherit the dual poison/antidote allele, or express a compatible antidote. This Schizosaccharomyces kambucha (Fission yeast) protein is Meiotic drive suppressor wtf6.